The sequence spans 348 residues: Alcohol dehydrogenase 2 (348 aa).

Ser-2 bears the N-acetylserine mark. 7 residues coordinate Zn(2+): Cys-44, His-67, Cys-98, Cys-101, Cys-104, Cys-112, and Cys-154. NAD(+) is bound by residues 178 to 184 (GAAGGLG), Asp-202, Lys-207, 269 to 271 (VGL), and Arg-341.

Belongs to the zinc-containing alcohol dehydrogenase family. As to quaternary structure, homotetramer. Requires Zn(2+) as cofactor.

Its subcellular location is the cytoplasm. It carries out the reaction a primary alcohol + NAD(+) = an aldehyde + NADH + H(+). The catalysed reaction is a secondary alcohol + NAD(+) = a ketone + NADH + H(+). This is Alcohol dehydrogenase 2 (ADH2) from Kluyveromyces marxianus (Yeast).